Reading from the N-terminus, the 544-residue chain is Chaperonin GroEL 3 (544 aa).

ATP is bound by residues 30–33 (TLGP), K51, 87–91 (DGTTT), G415, and D495.

This sequence belongs to the chaperonin (HSP60) family. As to quaternary structure, forms a cylinder of 14 subunits composed of two heptameric rings stacked back-to-back. Interacts with the co-chaperonin GroES.

It localises to the cytoplasm. It carries out the reaction ATP + H2O + a folded polypeptide = ADP + phosphate + an unfolded polypeptide.. Functionally, together with its co-chaperonin GroES, plays an essential role in assisting protein folding. The GroEL-GroES system forms a nano-cage that allows encapsulation of the non-native substrate proteins and provides a physical environment optimized to promote and accelerate protein folding. The sequence is that of Chaperonin GroEL 3 from Psychromonas ingrahamii (strain DSM 17664 / CCUG 51855 / 37).